Consider the following 395-residue polypeptide: Indoleacetate--lysine synthetase (395 aa).

Belongs to the ATP-dependent AMP-binding enzyme family.

It carries out the reaction (indol-3-yl)acetate + L-lysine + ATP = N(6)-[(indole-3-yl)acetyl]-L-lysine + ADP + phosphate + H(+). Its function is as follows. Conversion of IAA to IAA-lysine. The chain is Indoleacetate--lysine synthetase (iaaL) from Pseudomonas savastanoi (Pseudomonas syringae pv. savastanoi).